Reading from the N-terminus, the 238-residue chain is Uridylate kinase (238 aa).

13–16 contributes to the ATP binding site; that stretch reads KLSG. Position 53 (Gly-53) interacts with UMP. Gly-54 and Arg-58 together coordinate ATP. Residues Asp-73 and 134 to 141 each bind UMP; that span reads AGLPYFST. ATP contacts are provided by Asn-162, Tyr-168, and Asp-171.

Belongs to the UMP kinase family. In terms of assembly, homohexamer.

It localises to the cytoplasm. The enzyme catalyses UMP + ATP = UDP + ADP. Its pathway is pyrimidine metabolism; CTP biosynthesis via de novo pathway; UDP from UMP (UMPK route): step 1/1. With respect to regulation, inhibited by UTP. Catalyzes the reversible phosphorylation of UMP to UDP. This chain is Uridylate kinase, found in Clavibacter michiganensis subsp. michiganensis (strain NCPPB 382).